The following is a 326-amino-acid chain: Lipoyl synthase (326 aa).

Residues cysteine 56, cysteine 61, cysteine 67, cysteine 82, cysteine 86, cysteine 89, and serine 298 each coordinate [4Fe-4S] cluster. Residues 68–287 (WEDREATFLI…KDEADAIGYS (220 aa)) enclose the Radical SAM core domain.

It belongs to the radical SAM superfamily. Lipoyl synthase family. Requires [4Fe-4S] cluster as cofactor.

It is found in the cytoplasm. It catalyses the reaction [[Fe-S] cluster scaffold protein carrying a second [4Fe-4S](2+) cluster] + N(6)-octanoyl-L-lysyl-[protein] + 2 oxidized [2Fe-2S]-[ferredoxin] + 2 S-adenosyl-L-methionine + 4 H(+) = [[Fe-S] cluster scaffold protein] + N(6)-[(R)-dihydrolipoyl]-L-lysyl-[protein] + 4 Fe(3+) + 2 hydrogen sulfide + 2 5'-deoxyadenosine + 2 L-methionine + 2 reduced [2Fe-2S]-[ferredoxin]. Its pathway is protein modification; protein lipoylation via endogenous pathway; protein N(6)-(lipoyl)lysine from octanoyl-[acyl-carrier-protein]: step 2/2. Its function is as follows. Catalyzes the radical-mediated insertion of two sulfur atoms into the C-6 and C-8 positions of the octanoyl moiety bound to the lipoyl domains of lipoate-dependent enzymes, thereby converting the octanoylated domains into lipoylated derivatives. The polypeptide is Lipoyl synthase (Streptomyces griseus subsp. griseus (strain JCM 4626 / CBS 651.72 / NBRC 13350 / KCC S-0626 / ISP 5235)).